A 102-amino-acid polypeptide reads, in one-letter code: Small ribosomal subunit protein uS10 (102 aa).

This sequence belongs to the universal ribosomal protein uS10 family. In terms of assembly, part of the 30S ribosomal subunit.

Functionally, involved in the binding of tRNA to the ribosomes. This is Small ribosomal subunit protein uS10 from Rhizobium etli (strain CIAT 652).